A 946-amino-acid chain; its full sequence is Zinc finger CCCH-type antiviral protein 1 (946 aa).

Residues 1-254 (MTDPEVFCFI…DRSKSRDRFH (254 aa)) are N-terminal domain. The Nuclear localization signal motif lies at 69-76 (RARVCRRK). C3H1-type zinc fingers lie at residues 73 to 86 (CRRKYCQRPCDSLH), 87 to 113 (LCKLNLLGRCHYAQSQRNLCKYSHDVL), 150 to 172 (CKSYKGEGRKQICGQPQPCERLH), and 173 to 194 (ICEHFTRGNCSYLNCLRSHNLM). Disordered regions lie at residues 221–283 (NKHT…KDPL) and 302–354 (RAQL…AAGF). The segment at 224-254 (TRRNPPSMRAPHPHRRGGAHRDRSKSRDRFH) is binding to EXOSC5. Basic and acidic residues predominate over residues 242–257 (AHRDRSKSRDRFHHNS). Residue Ser-257 is modified to Phosphoserine. Ser-262 is subject to Phosphoserine; by GSK3-beta. Residues Ser-265, Ser-269, and Ser-273 each carry the phosphoserine modification. Phosphothreonine is present on Thr-277. The short motif at 283-290 (LEDVSADV) is the Nuclear export signal element. 2 positions are modified to phosphoserine: Ser-324 and Ser-350. Residues 412–413 (KR) carry the Nuclear localization signal motif. Residue Ser-425 is modified to Phosphoserine. Residues 461–491 (NPAWPGTSTHNGPNGFSQIMDETPNVSKSSP) form a disordered region. Residues 466–477 (GTSTHNGPNGFS) show a composition bias toward polar residues. Phosphotyrosine is present on Tyr-508. A disordered region spans residues 523-570 (GETTTPVQGSNRLPPSPLSSSTSHRVAASGSPGKSSTHASVSPASEPS). Residues 524-533 (ETTTPVQGSN) show a composition bias toward polar residues. Phosphoserine is present on Ser-553. The segment covering 554–567 (PGKSSTHASVSPAS) has biased composition (polar residues). Phosphoserine occurs at positions 583 and 680. Residues 684–771 (FVEKTLNSVF…ASKTQRHVVR (88 aa)) form the WWE domain. The region spanning 805–946 (SPQRNASTVS…SLDSSGLQRK (142 aa)) is the PARP catalytic domain.

This sequence belongs to the ARTD/PARP family. In terms of assembly, homodimer or homooligomer. Homooligomerization is essential for its antiviral activity. Interacts with EXOSC5. Interacts (via N-terminal domain) with DDX17 in an RNA-independent manner. Interacts with EXOSC3, EXOSC7, DCP2 and DCP1A. Interacts with PARN in an RNA-independent manner. Interacts with XRN1 in an RNA-dependent manner. Interacts (via N-terminal domain) with DHX30 (via N-terminus) in an RNA-independent manner. Isoform 2 interacts (via zinc-fingers) with RIGI in an RNA-dependent manner. Post-translationally, phosphorylation at Ser-273 is essential for sequential phosphorylation of Ser-269, Ser-265, Ser-262 and Ser-257 by GSK3-beta. Phosphorylation by GSK3-beta enhances its antiviral activity.

It is found in the cytoplasm. Its subcellular location is the nucleus. In terms of biological role, antiviral protein which inhibits the replication of viruses by recruiting the cellular RNA degradation machineries to degrade the viral mRNAs. Binds to a ZAP-responsive element (ZRE) present in the target viral mRNA, recruits cellular poly(A)-specific ribonuclease PARN to remove the poly(A) tail, and the 3'-5' exoribonuclease complex exosome to degrade the RNA body from the 3'-end. It also recruits the decapping complex DCP1-DCP2 through RNA helicase p72 (DDX17) to remove the cap structure of the viral mRNA to initiate its degradation from the 5'-end. Its target viruses belong to families which include retroviridae: human immunodeficiency virus type 1 (HIV-1) and moloney and murine leukemia virus (MoMLV), filoviridae: ebola virus (EBOV) and marburg virus (MARV), togaviridae: sindbis virus (SINV) and Ross river virus (RRV). Specifically targets the multiply spliced but not unspliced or singly spliced HIV-1 mRNAs for degradation. Isoform 1 is a more potent viral inhibitor than isoform 2. Isoform 2 acts as a positive regulator of RIG-I signaling resulting in activation of the downstream effector IRF3 leading to the expression of type I IFNs and IFN stimulated genes (ISGs). This is Zinc finger CCCH-type antiviral protein 1 (Zc3hav1) from Mus musculus (Mouse).